The primary structure comprises 359 residues: Large ribosomal subunit protein bL27m (359 aa).

A mitochondrion-targeting transit peptide spans 1 to 24 (MSFWKVATLWQMPLRPSILVQVRT). The segment at 29-48 (AAGSRTSMKDSAGRRLGPKK) is disordered. Residues 35-48 (SMKDSAGRRLGPKK) show a composition bias toward basic and acidic residues.

This sequence belongs to the bacterial ribosomal protein bL27 family.

It is found in the mitochondrion. Functionally, component of the large subunit of mitochondrial ribosome. This Eremothecium gossypii (strain ATCC 10895 / CBS 109.51 / FGSC 9923 / NRRL Y-1056) (Yeast) protein is Large ribosomal subunit protein bL27m (MRPL2).